Reading from the N-terminus, the 96-residue chain is Phosphoribosyl-ATP pyrophosphatase (96 aa).

Belongs to the PRA-PH family.

It is found in the cytoplasm. It catalyses the reaction 1-(5-phospho-beta-D-ribosyl)-ATP + H2O = 1-(5-phospho-beta-D-ribosyl)-5'-AMP + diphosphate + H(+). It functions in the pathway amino-acid biosynthesis; L-histidine biosynthesis; L-histidine from 5-phospho-alpha-D-ribose 1-diphosphate: step 2/9. The polypeptide is Phosphoribosyl-ATP pyrophosphatase (Methanobrevibacter smithii (strain ATCC 35061 / DSM 861 / OCM 144 / PS)).